Reading from the N-terminus, the 154-residue chain is Myoglobin (154 aa).

Positions 2 to 148 (GLSEAEWQLV…FRKDIAAKYK (147 aa)) constitute a Globin domain. Ser4 is modified (phosphoserine). His65 is a nitrite binding site. His65 provides a ligand contact to O2. Residue Thr68 is modified to Phosphothreonine. His94 is a binding site for heme b.

It belongs to the globin family. Monomeric.

It localises to the cytoplasm. The protein resides in the sarcoplasm. The catalysed reaction is Fe(III)-heme b-[protein] + nitric oxide + H2O = Fe(II)-heme b-[protein] + nitrite + 2 H(+). It catalyses the reaction H2O2 + AH2 = A + 2 H2O. Monomeric heme protein which primary function is to store oxygen and facilitate its diffusion within muscle tissues. Reversibly binds oxygen through a pentacoordinated heme iron and enables its timely and efficient release as needed during periods of heightened demand. Depending on the oxidative conditions of tissues and cells, and in addition to its ability to bind oxygen, it also has a nitrite reductase activity whereby it regulates the production of bioactive nitric oxide. Under stress conditions, like hypoxia and anoxia, it also protects cells against reactive oxygen species thanks to its pseudoperoxidase activity. This Indopacetus pacificus (Longman's beaked whale) protein is Myoglobin (MB).